Consider the following 336-residue polypeptide: Polyadenylate-binding protein-interacting protein 12 (336 aa).

A disordered region spans residues 14–47 (EAGGLISPSPPSSVTSQESGASSNNDHGGNGIHD). The span at 25-40 (SSVTSQESGASSNNDH) shows a compositional bias: polar residues. Positions 75–85 (KLNPMAKEFIP) match the PAM2-like motif. Positions 122-134 (RRKKSFGQQGKRR) match the Bipartite nuclear localization signal motif. 2 consecutive RRM domains span residues 150–225 (RTVY…PSKT) and 247–323 (RTIY…PSKT).

As to quaternary structure, interacts with MPC. Expressed in roots, leaves, stems, flowers and siliques. Detected in flowers only in growing organs: gynoecium, petals, stamenal filaments, anther walls and ovules.

Its subcellular location is the nucleus. In terms of biological role, binds nucleotic acids in vitro. The sequence is that of Polyadenylate-binding protein-interacting protein 12 (CID12) from Arabidopsis thaliana (Mouse-ear cress).